The primary structure comprises 262 residues: Indole-3-glycerol phosphate synthase (262 aa).

This sequence belongs to the TrpC family.

The enzyme catalyses 1-(2-carboxyphenylamino)-1-deoxy-D-ribulose 5-phosphate + H(+) = (1S,2R)-1-C-(indol-3-yl)glycerol 3-phosphate + CO2 + H2O. Its pathway is amino-acid biosynthesis; L-tryptophan biosynthesis; L-tryptophan from chorismate: step 4/5. This is Indole-3-glycerol phosphate synthase from Leptothrix cholodnii (strain ATCC 51168 / LMG 8142 / SP-6) (Leptothrix discophora (strain SP-6)).